Here is a 278-residue protein sequence, read N- to C-terminus: 4-deoxy-L-threo-5-hexosulose-uronate ketol-isomerase (278 aa).

Zn(2+)-binding residues include H196, H198, E203, and H245.

It belongs to the KduI family. Requires Zn(2+) as cofactor.

It carries out the reaction 5-dehydro-4-deoxy-D-glucuronate = 3-deoxy-D-glycero-2,5-hexodiulosonate. The protein operates within glycan metabolism; pectin degradation; 2-dehydro-3-deoxy-D-gluconate from pectin: step 4/5. Functionally, catalyzes the isomerization of 5-dehydro-4-deoxy-D-glucuronate to 3-deoxy-D-glycero-2,5-hexodiulosonate. This Yersinia pseudotuberculosis serotype O:1b (strain IP 31758) protein is 4-deoxy-L-threo-5-hexosulose-uronate ketol-isomerase.